A 267-amino-acid polypeptide reads, in one-letter code: Type II pantothenate kinase (267 aa).

Position 6-13 (6-13 (DAGGTLIK)) interacts with ATP. Glu70 serves as the catalytic Proton acceptor. ATP contacts are provided by residues Thr99, 121 to 125 (GGMIQ), Tyr137, and Ser225.

Belongs to the type II pantothenate kinase family. In terms of assembly, homodimer.

Its subcellular location is the cytoplasm. The enzyme catalyses (R)-pantothenate + ATP = (R)-4'-phosphopantothenate + ADP + H(+). It functions in the pathway cofactor biosynthesis; coenzyme A biosynthesis; CoA from (R)-pantothenate: step 1/5. Functionally, catalyzes the phosphorylation of pantothenate (Pan), the first step in CoA biosynthesis. The sequence is that of Type II pantothenate kinase from Staphylococcus aureus (strain bovine RF122 / ET3-1).